We begin with the raw amino-acid sequence, 192 residues long: 7-methyl-GTP pyrophosphatase (192 aa).

Catalysis depends on Asp-69, which acts as the Proton acceptor.

It belongs to the Maf family. YceF subfamily. Requires a divalent metal cation as cofactor.

The protein localises to the cytoplasm. The enzyme catalyses N(7)-methyl-GTP + H2O = N(7)-methyl-GMP + diphosphate + H(+). Nucleoside triphosphate pyrophosphatase that hydrolyzes 7-methyl-GTP (m(7)GTP). May have a dual role in cell division arrest and in preventing the incorporation of modified nucleotides into cellular nucleic acids. The chain is 7-methyl-GTP pyrophosphatase from Methylobacillus flagellatus (strain ATCC 51484 / DSM 6875 / VKM B-1610 / KT).